A 356-amino-acid chain; its full sequence is uncharacterized protein (356 aa).

A helical transmembrane segment spans residues 8–28 (ILGFVLFVLGAAIFLTEVMHS).

It to C.elegans C41C4.1 and C18B2.1.

Its subcellular location is the membrane. This is an uncharacterized protein from Caenorhabditis elegans.